A 184-amino-acid polypeptide reads, in one-letter code: ATP synthase subunit b (184 aa).

A helical transmembrane segment spans residues 16-36 (LIPPIPELVIGLIAFVIVFGF).

It belongs to the ATPase B chain family. F-type ATPases have 2 components, F(1) - the catalytic core - and F(0) - the membrane proton channel. F(1) has five subunits: alpha(3), beta(3), gamma(1), delta(1), epsilon(1). F(0) has three main subunits: a(1), b(2) and c(10-14). The alpha and beta chains form an alternating ring which encloses part of the gamma chain. F(1) is attached to F(0) by a central stalk formed by the gamma and epsilon chains, while a peripheral stalk is formed by the delta and b chains.

Its subcellular location is the cell membrane. Functionally, f(1)F(0) ATP synthase produces ATP from ADP in the presence of a proton or sodium gradient. F-type ATPases consist of two structural domains, F(1) containing the extramembraneous catalytic core and F(0) containing the membrane proton channel, linked together by a central stalk and a peripheral stalk. During catalysis, ATP synthesis in the catalytic domain of F(1) is coupled via a rotary mechanism of the central stalk subunits to proton translocation. In terms of biological role, component of the F(0) channel, it forms part of the peripheral stalk, linking F(1) to F(0). In Streptomyces coelicolor (strain ATCC BAA-471 / A3(2) / M145), this protein is ATP synthase subunit b.